The sequence spans 123 residues: Fluoride-specific ion channel FluC (123 aa).

4 consecutive transmembrane segments (helical) span residues 1-21 (MQWL…GWLA), 32-52 (LGTL…LVWF), 66-86 (FVIT…VEVF), and 99-119 (GLIG…FYFF). Na(+) contacts are provided by Gly-73 and Thr-76.

It belongs to the fluoride channel Fluc/FEX (TC 1.A.43) family.

The protein resides in the cell inner membrane. It carries out the reaction fluoride(in) = fluoride(out). With respect to regulation, na(+) is not transported, but it plays an essential structural role and its presence is essential for fluoride channel function. Its function is as follows. Fluoride-specific ion channel. Important for reducing fluoride concentration in the cell, thus reducing its toxicity. In Psychrobacter cryohalolentis (strain ATCC BAA-1226 / DSM 17306 / VKM B-2378 / K5), this protein is Fluoride-specific ion channel FluC.